A 105-amino-acid chain; its full sequence is ESAT-6-like protein EsxB (105 aa).

The segment at 1-23 (MSQGFKTEADVMRNTAHRVDDTN) is disordered. Positions 7–21 (TEADVMRNTAHRVDD) are enriched in basic and acidic residues.

The protein belongs to the WXG100 family. CFP-10 subfamily. In terms of assembly, forms a tight 1:1 complex with EsxB.

The protein is ESAT-6-like protein EsxB of Corynebacterium diphtheriae (strain ATCC 700971 / NCTC 13129 / Biotype gravis).